The primary structure comprises 629 residues: Probable alpha-L-arabinofuranosidase A (629 aa).

An N-terminal signal peptide occupies residues 1–25; it reads MVALSTLSGLSALPFLFSLVQNVYG. N-linked (GlcNAc...) asparagine glycosylation is found at Asn36, Asn51, Asn140, Asn152, Asn168, Asn171, Asn260, Asn494, and Asn534.

It belongs to the glycosyl hydrolase 51 family.

It localises to the secreted. It carries out the reaction Hydrolysis of terminal non-reducing alpha-L-arabinofuranoside residues in alpha-L-arabinosides.. It participates in glycan metabolism; L-arabinan degradation. Alpha-L-arabinofuranosidase involved in the degradation of arabinoxylan, a major component of plant hemicellulose. Acts only on small linear 1,5-alpha-linked L-arabinofuranosyl oligosaccharides. This is Probable alpha-L-arabinofuranosidase A (abfA) from Aspergillus flavus (strain ATCC 200026 / FGSC A1120 / IAM 13836 / NRRL 3357 / JCM 12722 / SRRC 167).